We begin with the raw amino-acid sequence, 387 residues long: tRNA-specific 2-thiouridylase MnmA (387 aa).

ATP contacts are provided by residues 34–41 and Met-60; that span reads AMSGGVDS. Cys-127 functions as the Nucleophile in the catalytic mechanism. Cys-127 and Cys-223 form a disulfide bridge. Gly-151 serves as a coordination point for ATP. The interaction with tRNA stretch occupies residues 173-175; that stretch reads KDQ. Cys-223 acts as the Cysteine persulfide intermediate in catalysis.

This sequence belongs to the MnmA/TRMU family.

Its subcellular location is the cytoplasm. The enzyme catalyses S-sulfanyl-L-cysteinyl-[protein] + uridine(34) in tRNA + AH2 + ATP = 2-thiouridine(34) in tRNA + L-cysteinyl-[protein] + A + AMP + diphosphate + H(+). Functionally, catalyzes the 2-thiolation of uridine at the wobble position (U34) of tRNA, leading to the formation of s(2)U34. This Anaplasma marginale (strain St. Maries) protein is tRNA-specific 2-thiouridylase MnmA.